Reading from the N-terminus, the 199-residue chain is Homeobox protein ceh-19 (199 aa).

Positions 1–42 (MAFNIESLLEKKSNPVEEGNDFEEENDSEKNGEEDEEEEEKN) are disordered. Positions 18 to 40 (EGNDFEEENDSEKNGEEDEEEEE) are enriched in acidic residues. Residues 94–153 (ERKPRQAYSARQLDRLETEFQTDKYLSVNKRIQLSQTLNLTETQIKTWFQNRRTKWKKQL) constitute a DNA-binding region (homeobox).

It is found in the nucleus. Its function is as follows. Probable transcription factor. Required for MC motor neuron differentiation and function, including role in modulating pharyngeal pumping. Regulates gene expression of FMRFamide-like neuropeptide flp-2 in MC motor neurons. May act downstream of transcription factor pha-4. In Caenorhabditis elegans, this protein is Homeobox protein ceh-19 (ceh-19).